A 542-amino-acid chain; its full sequence is uncharacterized protein (542 aa).

Over 1-78 (MSVQKEEYDI…EEKKLVRKMD (78 aa)) the chain is Extracellular. The chain crosses the membrane as a helical span at residues 79-99 (LKIFLWVFIMFAFLDLIRKNI). At 100 to 119 (ARAVSDNFIVDLKMNTNDYN) the chain is on the cytoplasmic side. The helical transmembrane segment at 120–140 (LGQTVYLVIFLASELPGNLLS) threads the bilayer. The Extracellular segment spans residues 141-147 (KRFGPER). A helical membrane pass occupies residues 148 to 168 (VIPVQIVLWSVICITQAGLKN). Topologically, residues 169 to 176 (RGQFIATR) are cytoplasmic. A helical transmembrane segment spans residues 177 to 197 (CLLGMVQGGFIPDNILYLSYY). The Extracellular segment spans residues 198-208 (YTGAELTFRLS). Residues 209 to 229 (FFWCAIPLFQILGSLLASGII) form a helical membrane-spanning segment. Over 230–241 (EMRGIHNLAGWQ) the chain is Cytoplasmic. A helical membrane pass occupies residues 242 to 262 (YLFIIEGFLSLSVGVASFYLM). The Extracellular portion of the chain corresponds to 263–326 (RRGPTQTGES…TLTEFDLWPL (64 aa)). A helical transmembrane segment spans residues 327 to 347 (FIQGITAFISLQTVGSYLSLI). Residues 348 to 359 (LKSLNYSTFLSN) are Cytoplasmic-facing. Residues 360-380 (ILAIPGQALLLINLPLAALLS) traverse the membrane as a helical segment. Residues 381-387 (RKLKEKS) are Extracellular-facing. The helical transmembrane segment at 388–408 (LCVGIANVWVLPFIVSLVALP) threads the bilayer. Topologically, residues 409-416 (TDTNPWIK) are cytoplasmic. Residues 417-437 (YILLTGILGLPYTHSILAGWV) traverse the membrane as a helical segment. Over 438-482 (SEISNSVRSRTVGTALYNMSAQVGAIIASNMYRNDDKPYYTRGNK) the chain is Extracellular. Residues 483-503 (ILLGFTCFNICMAVATKFYYI) traverse the membrane as a helical segment. Topologically, residues 504–542 (SRNKYKDRKWNSMTKEEQINYLDTTKDKGMKRLDYRFIH) are cytoplasmic.

Belongs to the major facilitator superfamily. Allantoate permease family.

It localises to the membrane. This is an uncharacterized protein from Saccharomyces cerevisiae (strain ATCC 204508 / S288c) (Baker's yeast).